A 179-amino-acid polypeptide reads, in one-letter code: Shikimate kinase (179 aa).

Residue G22 to S27 participates in ATP binding. Residue S26 participates in Mg(2+) binding. Substrate-binding residues include D44, R68, and G90. Residue R128 participates in ATP binding. Substrate is bound at residue R147.

The protein belongs to the shikimate kinase family. As to quaternary structure, monomer. Mg(2+) is required as a cofactor.

The protein localises to the cytoplasm. It catalyses the reaction shikimate + ATP = 3-phosphoshikimate + ADP + H(+). The protein operates within metabolic intermediate biosynthesis; chorismate biosynthesis; chorismate from D-erythrose 4-phosphate and phosphoenolpyruvate: step 5/7. Catalyzes the specific phosphorylation of the 3-hydroxyl group of shikimic acid using ATP as a cosubstrate. This Geobacter metallireducens (strain ATCC 53774 / DSM 7210 / GS-15) protein is Shikimate kinase.